An 886-amino-acid polypeptide reads, in one-letter code: Valine--tRNA ligase (886 aa).

The 'HIGH' region signature appears at 43 to 53 (PYPTGRMHLGH). The short motif at 528-532 (KMSKS) is the 'KMSKS' region element. ATP is bound at residue Lys-531.

Belongs to the class-I aminoacyl-tRNA synthetase family. ValS type 2 subfamily.

It is found in the cytoplasm. The catalysed reaction is tRNA(Val) + L-valine + ATP = L-valyl-tRNA(Val) + AMP + diphosphate. Its function is as follows. Catalyzes the attachment of valine to tRNA(Val). As ValRS can inadvertently accommodate and process structurally similar amino acids such as threonine, to avoid such errors, it has a 'posttransfer' editing activity that hydrolyzes mischarged Thr-tRNA(Val) in a tRNA-dependent manner. The protein is Valine--tRNA ligase of Methanococcus maripaludis (strain DSM 14266 / JCM 13030 / NBRC 101832 / S2 / LL).